The primary structure comprises 477 residues: Cysteine--tRNA ligase (477 aa).

Position 28 (cysteine 28) interacts with Zn(2+). The 'HIGH' region motif lies at 30 to 40; the sequence is PTVYDYPHLGH. Positions 208, 233, and 237 each coordinate Zn(2+). Residues 265 to 269 carry the 'KMSKS' region motif; it reads KMSKS. Lysine 268 lines the ATP pocket.

The protein belongs to the class-I aminoacyl-tRNA synthetase family. Zn(2+) serves as cofactor.

Its subcellular location is the cytoplasm. The enzyme catalyses tRNA(Cys) + L-cysteine + ATP = L-cysteinyl-tRNA(Cys) + AMP + diphosphate. This chain is Cysteine--tRNA ligase, found in Pyrococcus furiosus (strain ATCC 43587 / DSM 3638 / JCM 8422 / Vc1).